Consider the following 215-residue polypeptide: Transcription factor LAX PANICLE 1 (215 aa).

The tract at residues 1 to 48 (MHDPRGFPIHPQPYHLHPTAGGLGEGRMRGGGRRRPGAKLSTDPQSVA) is disordered. The basic motif; degenerate stretch occupies residues 40–53 (LSTDPQSVAARERR). Residues 40–89 (LSTDPQSVAARERRHRISDRFRVLRSLVPGGSKMDTVSMLEQAIHYVKFL) enclose the bHLH domain. The segment at 54-89 (HRISDRFRVLRSLVPGGSKMDTVSMLEQAIHYVKFL) is helix-loop-helix motif.

The protein belongs to the bHLH protein family. As to quaternary structure, efficient DNA binding requires dimerization with another bHLH protein. Interacts with LAX2. As to expression, expressed in the boundary between the shoot apical meristem (SAM) and the region of new meristem formation.

It localises to the nucleus. Functionally, transcription factor that seems to regulate organogenesis in postembryonic development. Involved in the regulation of shoot branching by controlling axillary meristem initiation. Functions in association with LAX2 to regulate the process of AM formation. Possesses transactivation activity in yeast. The chain is Transcription factor LAX PANICLE 1 from Oryza sativa subsp. japonica (Rice).